A 315-amino-acid polypeptide reads, in one-letter code: Ribose-phosphate pyrophosphokinase (315 aa).

ATP-binding positions include 37–39 (DGE) and 96–97 (RQ). Residues His-131 and Asp-170 each contribute to the Mg(2+) site. The active site involves Lys-194. Residues Arg-196, Asp-220, and 224-228 (DTGGT) contribute to the D-ribose 5-phosphate site.

It belongs to the ribose-phosphate pyrophosphokinase family. Class I subfamily. In terms of assembly, homohexamer. It depends on Mg(2+) as a cofactor.

It is found in the cytoplasm. It catalyses the reaction D-ribose 5-phosphate + ATP = 5-phospho-alpha-D-ribose 1-diphosphate + AMP + H(+). It participates in metabolic intermediate biosynthesis; 5-phospho-alpha-D-ribose 1-diphosphate biosynthesis; 5-phospho-alpha-D-ribose 1-diphosphate from D-ribose 5-phosphate (route I): step 1/1. Its function is as follows. Involved in the biosynthesis of the central metabolite phospho-alpha-D-ribosyl-1-pyrophosphate (PRPP) via the transfer of pyrophosphoryl group from ATP to 1-hydroxyl of ribose-5-phosphate (Rib-5-P). The sequence is that of Ribose-phosphate pyrophosphokinase from Photorhabdus laumondii subsp. laumondii (strain DSM 15139 / CIP 105565 / TT01) (Photorhabdus luminescens subsp. laumondii).